The sequence spans 180 residues: Shikimate kinase (180 aa).

ATP is bound at residue 14–19 (GAGKTC). Residue Thr-18 coordinates Mg(2+). Positions 36, 60, and 82 each coordinate substrate. Arg-120 is a binding site for ATP. Arg-139 is a substrate binding site.

This sequence belongs to the shikimate kinase family. As to quaternary structure, monomer. The cofactor is Mg(2+).

It localises to the cytoplasm. The catalysed reaction is shikimate + ATP = 3-phosphoshikimate + ADP + H(+). Its pathway is metabolic intermediate biosynthesis; chorismate biosynthesis; chorismate from D-erythrose 4-phosphate and phosphoenolpyruvate: step 5/7. In terms of biological role, catalyzes the specific phosphorylation of the 3-hydroxyl group of shikimic acid using ATP as a cosubstrate. This Stenotrophomonas maltophilia (strain R551-3) protein is Shikimate kinase.